The following is a 339-amino-acid chain: Phosphate acyltransferase (339 aa).

The protein belongs to the PlsX family. In terms of assembly, homodimer. Probably interacts with PlsY.

It localises to the cytoplasm. It carries out the reaction a fatty acyl-[ACP] + phosphate = an acyl phosphate + holo-[ACP]. It functions in the pathway lipid metabolism; phospholipid metabolism. In terms of biological role, catalyzes the reversible formation of acyl-phosphate (acyl-PO(4)) from acyl-[acyl-carrier-protein] (acyl-ACP). This enzyme utilizes acyl-ACP as fatty acyl donor, but not acyl-CoA. The sequence is that of Phosphate acyltransferase from Clostridium perfringens (strain ATCC 13124 / DSM 756 / JCM 1290 / NCIMB 6125 / NCTC 8237 / Type A).